The primary structure comprises 219 residues: Cytidylate kinase (219 aa).

15–23 (GPAASGKGT) contacts ATP.

The protein belongs to the cytidylate kinase family. Type 1 subfamily.

Its subcellular location is the cytoplasm. It carries out the reaction CMP + ATP = CDP + ADP. The catalysed reaction is dCMP + ATP = dCDP + ADP. This Brucella suis biovar 1 (strain 1330) protein is Cytidylate kinase.